The chain runs to 564 residues: 2-succinyl-5-enolpyruvyl-6-hydroxy-3-cyclohexene-1-carboxylate synthase (564 aa).

Belongs to the TPP enzyme family. MenD subfamily. Homodimer. Mg(2+) serves as cofactor. Requires Mn(2+) as cofactor. Thiamine diphosphate is required as a cofactor.

It catalyses the reaction isochorismate + 2-oxoglutarate + H(+) = 5-enolpyruvoyl-6-hydroxy-2-succinyl-cyclohex-3-ene-1-carboxylate + CO2. The protein operates within quinol/quinone metabolism; 1,4-dihydroxy-2-naphthoate biosynthesis; 1,4-dihydroxy-2-naphthoate from chorismate: step 2/7. It functions in the pathway quinol/quinone metabolism; menaquinone biosynthesis. Its function is as follows. Catalyzes the thiamine diphosphate-dependent decarboxylation of 2-oxoglutarate and the subsequent addition of the resulting succinic semialdehyde-thiamine pyrophosphate anion to isochorismate to yield 2-succinyl-5-enolpyruvyl-6-hydroxy-3-cyclohexene-1-carboxylate (SEPHCHC). The chain is 2-succinyl-5-enolpyruvyl-6-hydroxy-3-cyclohexene-1-carboxylate synthase from Vibrio vulnificus (strain CMCP6).